Reading from the N-terminus, the 340-residue chain is Uroporphyrinogen decarboxylase (340 aa).

Substrate contacts are provided by residues 21 to 25 (RQAGR), phenylalanine 40, aspartate 71, tyrosine 147, serine 202, and histidine 316.

It belongs to the uroporphyrinogen decarboxylase family. Homodimer.

It localises to the cytoplasm. The enzyme catalyses uroporphyrinogen III + 4 H(+) = coproporphyrinogen III + 4 CO2. The protein operates within porphyrin-containing compound metabolism; protoporphyrin-IX biosynthesis; coproporphyrinogen-III from 5-aminolevulinate: step 4/4. Catalyzes the decarboxylation of four acetate groups of uroporphyrinogen-III to yield coproporphyrinogen-III. This chain is Uroporphyrinogen decarboxylase, found in Helicobacter hepaticus (strain ATCC 51449 / 3B1).